The chain runs to 524 residues: Inosine-5'-monophosphate dehydrogenase 4 (524 aa).

2 CBS domains span residues 122 to 183 (FINS…VVSE) and 185 to 241 (MTKN…PLAS). Ser-125 is subject to Phosphoserine. NAD(+) contacts are provided by residues 279–281 (DSS) and 329–331 (GMG). The K(+) site is built by Gly-331 and Gly-333. Ser-334 is a binding site for IMP. Cys-336 serves as a coordination point for K(+). Cys-336 functions as the Thioimidate intermediate in the catalytic mechanism. Residues 369–371 (DGG), 392–393 (GG), and 416–420 (YRGMG) contribute to the IMP site. Arg-438 functions as the Proton acceptor in the catalytic mechanism. Gln-450 contacts IMP. Glu-509, Gly-510, and Gly-511 together coordinate K(+).

This sequence belongs to the IMPDH/GMPR family. As to quaternary structure, homotetramer. Seems to be able to form heterotetramers composed from more than 1 of the 3 IMPDH gene products (IMD2-4). Requires K(+) as cofactor.

Its subcellular location is the cytoplasm. The enzyme catalyses IMP + NAD(+) + H2O = XMP + NADH + H(+). Its pathway is purine metabolism; XMP biosynthesis via de novo pathway; XMP from IMP: step 1/1. With respect to regulation, mycophenolic acid (MPA) is a non-competitive inhibitor that prevents formation of the closed enzyme conformation by binding to the same site as the amobile flap. In contrast, mizoribine monophosphate (MZP) is a competitive inhibitor that induces the closed conformation. MPA is a potent inhibitor of mammalian IMPDHs but a poor inhibitor of the bacterial enzymes. MZP is a more potent inhibitor of bacterial IMPDH. Catalyzes the conversion of inosine 5'-phosphate (IMP) to xanthosine 5'-phosphate (XMP), the first committed and rate-limiting step in the de novo synthesis of guanine nucleotides, and therefore plays an important role in the regulation of cell growth. This chain is Inosine-5'-monophosphate dehydrogenase 4, found in Saccharomyces cerevisiae (strain ATCC 204508 / S288c) (Baker's yeast).